The sequence spans 642 residues: Threonine--tRNA ligase (642 aa).

Residues 1-61 (MPIITLPDGS…EHDASLEIIT (61 aa)) form the TGS domain. The catalytic stretch occupies residues 244–535 (DHRKIGKQLD…LIEEYAGFFP (292 aa)). Positions 335, 386, and 512 each coordinate Zn(2+).

The protein belongs to the class-II aminoacyl-tRNA synthetase family. Homodimer. Requires Zn(2+) as cofactor.

It localises to the cytoplasm. It carries out the reaction tRNA(Thr) + L-threonine + ATP = L-threonyl-tRNA(Thr) + AMP + diphosphate + H(+). Catalyzes the attachment of threonine to tRNA(Thr) in a two-step reaction: L-threonine is first activated by ATP to form Thr-AMP and then transferred to the acceptor end of tRNA(Thr). Also edits incorrectly charged L-seryl-tRNA(Thr). The protein is Threonine--tRNA ligase of Vibrio cholerae serotype O1 (strain ATCC 39541 / Classical Ogawa 395 / O395).